The following is a 335-amino-acid chain: 3-hydroxy-3-methylglutaryl-CoA lyase, cytoplasmic (335 aa).

Gly-2 is lipidated: N-myristoyl glycine. Positions 43-310 constitute a Pyruvate carboxyltransferase domain; it reads VKIVEVGPRD…ETGVDLLKVM (268 aa). Arg-51 is a substrate binding site. Position 52 (Asp-52) interacts with a divalent metal cation. At Lys-58 the chain carries N6-acetyllysine. His-243 and His-245 together coordinate a divalent metal cation. Cys-276 is an active-site residue. An a divalent metal cation-binding site is contributed by Asn-285.

Belongs to the HMG-CoA lyase family. It depends on a divalent metal cation as a cofactor.

Its subcellular location is the cytoplasm. The protein localises to the cytosol. It is found in the endoplasmic reticulum membrane. It catalyses the reaction (3S)-3-hydroxy-3-methylglutaryl-CoA = acetoacetate + acetyl-CoA. It participates in metabolic intermediate metabolism; (S)-3-hydroxy-3-methylglutaryl-CoA degradation; acetoacetate from (S)-3-hydroxy-3-methylglutaryl-CoA: step 1/1. Its function is as follows. Non-mitochondrial 3-hydroxy-3-methylglutaryl-CoA lyase that catalyzes a cation-dependent cleavage of (S)-3-hydroxy-3-methylglutaryl-CoA into acetyl-CoA and acetoacetate, a key step in ketogenesis, the products of which support energy production in nonhepatic animal tissues. This chain is 3-hydroxy-3-methylglutaryl-CoA lyase, cytoplasmic (hmgcll1), found in Danio rerio (Zebrafish).